The chain runs to 302 residues: N-acetyl-D-glucosamine kinase (302 aa).

Residues 4 to 11 (GFDIGGTK) and 133 to 139 (GGGGLVL) each bind ATP. His156, Cys176, Cys178, and Cys183 together coordinate Zn(2+).

Belongs to the ROK (NagC/XylR) family. NagK subfamily.

It catalyses the reaction N-acetyl-D-glucosamine + ATP = N-acetyl-D-glucosamine 6-phosphate + ADP + H(+). It participates in cell wall biogenesis; peptidoglycan recycling. Functionally, catalyzes the phosphorylation of N-acetyl-D-glucosamine (GlcNAc) derived from cell-wall degradation, yielding GlcNAc-6-P. The chain is N-acetyl-D-glucosamine kinase from Salmonella typhi.